The following is a 776-amino-acid chain: Protocadherin beta-16 (776 aa).

Residues 1 to 28 (MEIGWMHNRRQRQVLVFFVLLSLSGAGA) form the signal peptide. Residues 29–690 (ELGSYSVVEE…TQANSLTVYL (662 aa)) are Extracellular-facing. 5 consecutive Cadherin domains span residues 35-133 (VVEE…SPMF), 138-242 (MILK…APEF), 247-347 (YKVQ…PPQV), 352-451 (LTSP…APTF), and 456-561 (YTLF…SPFV). N-linked (GlcNAc...) asparagine glycans are attached at residues asparagine 418 and asparagine 436. N-linked (GlcNAc...) asparagine glycosylation is present at asparagine 567. The Cadherin 6 domain occupies 568–671 (GSAPCTELVP…LVDGFSQPFL (104 aa)). A helical membrane pass occupies residues 691–711 (VVALASVSSLFLFSVLLFVAV). Residues 712-776 (RLCRRSRAAS…LKPIIPNFSP (65 aa)) are Cytoplasmic-facing.

It localises to the membrane. Its function is as follows. Potential calcium-dependent cell-adhesion protein. May be involved in the establishment and maintenance of specific neuronal connections in the brain. This is Protocadherin beta-16 from Homo sapiens (Human).